We begin with the raw amino-acid sequence, 122 residues long: FMN-binding protein (122 aa).

As to quaternary structure, monomer and homodimer. FMN is required as a cofactor.

The protein resides in the cytoplasm. Functions as a redox protein with a potential of -325 mV. The sequence is that of FMN-binding protein from Nitratidesulfovibrio vulgaris (strain DSM 19637 / Miyazaki F) (Desulfovibrio vulgaris).